We begin with the raw amino-acid sequence, 262 residues long: Putative hydro-lyase ROP_32680 (262 aa).

Belongs to the D-glutamate cyclase family.

This chain is Putative hydro-lyase ROP_32680, found in Rhodococcus opacus (strain B4).